The primary structure comprises 428 residues: Spermidine/putrescine import ATP-binding protein PotA (428 aa).

An ABC transporter domain is found at 6–238; sequence IEFKNVSKTY…PINHFVADFI (233 aa). Position 40–47 (40–47) interacts with ATP; that stretch reads GASGSGKS.

Belongs to the ABC transporter superfamily. Spermidine/putrescine importer (TC 3.A.1.11.1) family. The complex is composed of two ATP-binding proteins (PotA), two transmembrane proteins (PotB and PotC) and a solute-binding protein (PotD).

It is found in the cell membrane. It carries out the reaction ATP + H2O + polyamine-[polyamine-binding protein]Side 1 = ADP + phosphate + polyamineSide 2 + [polyamine-binding protein]Side 1.. Part of the ABC transporter complex PotABCD involved in spermidine/putrescine import. Responsible for energy coupling to the transport system. The sequence is that of Spermidine/putrescine import ATP-binding protein PotA from Lactococcus lactis subsp. lactis (strain IL1403) (Streptococcus lactis).